We begin with the raw amino-acid sequence, 257 residues long: MDDYTREMMDLKTLVTRTLEKKGVLAKIRAELRASVFEAIEEEDRVIENNEGLPPALLGSCNDRARQLHASPSGRLLSALICEYLDWAQLNHTLKVYQPECNSAKDSWKSEIRDFSINNGYELNRNEDSRPLLLDVLEGFLKFENMTQVMGGSSRRESETESSLSLDTRNPPRRSSASDSLPHQRRSVSASQASGAATSGYRKDESNWRYDTEDMPEEVMRASTALENLQLDRKTRNLTSSWRNVKDGTSEEEEGKD.

The region spanning 73–105 is the LisH domain; sequence SGRLLSALICEYLDWAQLNHTLKVYQPECNSAK. Disordered regions lie at residues 148 to 216 and 231 to 257; these read QVMG…EDMP and LDRK…EGKD. A compositionally biased stretch (low complexity) spans 187-199; it reads SVSASQASGAATS. Basic and acidic residues-rich tracts occupy residues 201-212 and 244-257; these read YRKDESNWRYDT and NVKD…EGKD.

Interacts with CEN1, LNG1/TRM2 and LNG2/TRM1 (via C-terminus).

The protein localises to the cytoplasm. It localises to the cytoskeleton. In terms of biological role, involved in the control of the dynamic organization of the cortical cytoskeleton. May play a role in the organization of microtubule arrays at the centrosome through interaction with centrin 1 (CEN1). This chain is Protein TONNEAU 1b (TON1B), found in Arabidopsis thaliana (Mouse-ear cress).